The primary structure comprises 222 residues: Beta-amylase (222 aa).

Thr36 provides a ligand contact to substrate. Glu74 serves as the catalytic Proton acceptor. Substrate-binding positions include 75 to 76 and Arg114; that span reads NA.

It belongs to the glycosyl hydrolase 14 family.

The enzyme catalyses Hydrolysis of (1-&gt;4)-alpha-D-glucosidic linkages in polysaccharides so as to remove successive maltose units from the non-reducing ends of the chains.. This is Beta-amylase (BMY1) from Secale cereale (Rye).